A 163-amino-acid polypeptide reads, in one-letter code: Oocyte-secreted protein 1 (163 aa).

Residues 1–21 (MKPSSGLRGLLVLFSLTWTCA) form the signal peptide.

Belongs to the PLAC1 family. Oocyte-specific.

The protein resides in the secreted. Its function is as follows. May be involved in cell differentiation. The protein is Oocyte-secreted protein 1 (OOSP1) of Bos taurus (Bovine).